Consider the following 344-residue polypeptide: Lysophosphatidic acid receptor 6 (344 aa).

The Extracellular segment spans residues 1–25 (MVSSNGSQCPYDDSFKYTLYGCMFS). N5 carries N-linked (GlcNAc...) asparagine glycosylation. Residues 26–46 (MVFVLGLISNCVAIYIFICAL) form a helical membrane-spanning segment. Residues 47–56 (KVRNETTTYM) lie on the Cytoplasmic side of the membrane. Residues 57 to 77 (INLAMSDLLFVFTLPFRIFYF) form a helical membrane-spanning segment. The Extracellular segment spans residues 78-90 (ATRNWPFGDLLCK). C89 and C168 form a disulfide bridge. The chain crosses the membrane as a helical span at residues 91-111 (ISVMLFYTNMYGSILFLTCIS). Over 112 to 134 (VDRFLAIVYPFKSKTLRTKRNAK) the chain is Cytoplasmic. Residues 135-155 (IVCIAVWFTVMGGSAPAVFFQ) form a helical membrane-spanning segment. The Extracellular segment spans residues 156–183 (STHSQGNNTSEACFENFPAATWKTYLSR). N162 and N163 each carry an N-linked (GlcNAc...) asparagine glycan. A helical membrane pass occupies residues 184-204 (IVIFIEIVGFFIPLILNVTCS). Residues 205–230 (SMVLRTLNKPVTLSRSKMNKTKVLKM) are Cytoplasmic-facing. The chain crosses the membrane as a helical span at residues 231–251 (IFVHLVIFCFCFVPYNINLIL). Residues 252–272 (YSLMRTQTFVNCSVVAAVRTM) are Extracellular-facing. A glycan (N-linked (GlcNAc...) asparagine) is linked at N262. Residues 273–293 (YPITLCIAVSNCCFDPIVYYF) form a helical membrane-spanning segment. C284 carries S-palmitoyl cysteine lipidation. Residues 294–344 (TSDTIQNSIKMKNWSVRRSDSRFSEVQGTENFIQHNLQTLKNKIFDNESAI) lie on the Cytoplasmic side of the membrane.

It belongs to the G-protein coupled receptor 1 family. Ubiquitously expressed. Detected in the hair follicles and skin (at protein level).

It localises to the cell membrane. Binds to oleoyl-L-alpha-lysophosphatidic acid (LPA). Intracellular cAMP is involved in the receptor activation. Important for the maintenance of hair growth and texture. This chain is Lysophosphatidic acid receptor 6 (Lpar6), found in Mus musculus (Mouse).